The sequence spans 151 residues: Deoxyuridine 5'-triphosphate nucleotidohydrolase (151 aa).

Substrate-binding positions include 70 to 72 (RSG), asparagine 83, 87 to 89 (LID), and methionine 97.

This sequence belongs to the dUTPase family. Requires Mg(2+) as cofactor.

The catalysed reaction is dUTP + H2O = dUMP + diphosphate + H(+). The protein operates within pyrimidine metabolism; dUMP biosynthesis; dUMP from dCTP (dUTP route): step 2/2. This enzyme is involved in nucleotide metabolism: it produces dUMP, the immediate precursor of thymidine nucleotides and it decreases the intracellular concentration of dUTP so that uracil cannot be incorporated into DNA. This is Deoxyuridine 5'-triphosphate nucleotidohydrolase from Actinobacillus succinogenes (strain ATCC 55618 / DSM 22257 / CCUG 43843 / 130Z).